The following is a 358-amino-acid chain: UDP-N-acetylglucosamine--N-acetylmuramyl-(pentapeptide) pyrophosphoryl-undecaprenol N-acetylglucosamine transferase (358 aa).

Residues 12-14, arginine 165, serine 195, and glutamine 290 contribute to the UDP-N-acetyl-alpha-D-glucosamine site; that span reads TAG.

Belongs to the glycosyltransferase 28 family. MurG subfamily.

The protein localises to the cell membrane. The catalysed reaction is di-trans,octa-cis-undecaprenyl diphospho-N-acetyl-alpha-D-muramoyl-L-alanyl-D-glutamyl-meso-2,6-diaminopimeloyl-D-alanyl-D-alanine + UDP-N-acetyl-alpha-D-glucosamine = di-trans,octa-cis-undecaprenyl diphospho-[N-acetyl-alpha-D-glucosaminyl-(1-&gt;4)]-N-acetyl-alpha-D-muramoyl-L-alanyl-D-glutamyl-meso-2,6-diaminopimeloyl-D-alanyl-D-alanine + UDP + H(+). It participates in cell wall biogenesis; peptidoglycan biosynthesis. In terms of biological role, cell wall formation. Catalyzes the transfer of a GlcNAc subunit on undecaprenyl-pyrophosphoryl-MurNAc-pentapeptide (lipid intermediate I) to form undecaprenyl-pyrophosphoryl-MurNAc-(pentapeptide)GlcNAc (lipid intermediate II). The sequence is that of UDP-N-acetylglucosamine--N-acetylmuramyl-(pentapeptide) pyrophosphoryl-undecaprenol N-acetylglucosamine transferase from Clostridium tetani (strain Massachusetts / E88).